A 462-amino-acid chain; its full sequence is ATP synthase subunit beta 1 (462 aa).

151 to 158 provides a ligand contact to ATP; sequence GGAGVGKT.

This sequence belongs to the ATPase alpha/beta chains family. F-type ATPases have 2 components, CF(1) - the catalytic core - and CF(0) - the membrane proton channel. CF(1) has five subunits: alpha(3), beta(3), gamma(1), delta(1), epsilon(1). CF(0) has four main subunits: a(1), b(1), b'(1) and c(9-12).

The protein localises to the cell inner membrane. It catalyses the reaction ATP + H2O + 4 H(+)(in) = ADP + phosphate + 5 H(+)(out). Its function is as follows. Produces ATP from ADP in the presence of a proton gradient across the membrane. The catalytic sites are hosted primarily by the beta subunits. This chain is ATP synthase subunit beta 1, found in Chlorobium luteolum (strain DSM 273 / BCRC 81028 / 2530) (Pelodictyon luteolum).